We begin with the raw amino-acid sequence, 645 residues long: DNA mismatch repair protein MutL (645 aa).

Disordered regions lie at residues 353–381 (RPENQLGGSVPAAAEPRPTGPDAGEFGPQ) and 395–420 (QGEPFARPAGGGSGSGYQYSPRPTTG).

It belongs to the DNA mismatch repair MutL/HexB family.

Functionally, this protein is involved in the repair of mismatches in DNA. It is required for dam-dependent methyl-directed DNA mismatch repair. May act as a 'molecular matchmaker', a protein that promotes the formation of a stable complex between two or more DNA-binding proteins in an ATP-dependent manner without itself being part of a final effector complex. The chain is DNA mismatch repair protein MutL from Pseudomonas syringae pv. tomato (strain ATCC BAA-871 / DC3000).